The primary structure comprises 690 residues: Elongation factor G (690 aa).

Residues 8–283 (EDYRNFGIMA…AVVDYLPSPL (276 aa)) enclose the tr-type G domain. GTP-binding positions include 17 to 24 (AHIDAGKT), 81 to 85 (DTPGH), and 135 to 138 (NKMD).

The protein belongs to the TRAFAC class translation factor GTPase superfamily. Classic translation factor GTPase family. EF-G/EF-2 subfamily.

The protein localises to the cytoplasm. In terms of biological role, catalyzes the GTP-dependent ribosomal translocation step during translation elongation. During this step, the ribosome changes from the pre-translocational (PRE) to the post-translocational (POST) state as the newly formed A-site-bound peptidyl-tRNA and P-site-bound deacylated tRNA move to the P and E sites, respectively. Catalyzes the coordinated movement of the two tRNA molecules, the mRNA and conformational changes in the ribosome. This Rhodopseudomonas palustris (strain ATCC BAA-98 / CGA009) protein is Elongation factor G.